Reading from the N-terminus, the 179-residue chain is Large ribosomal subunit protein uL10 (179 aa).

Belongs to the universal ribosomal protein uL10 family. In terms of assembly, part of the ribosomal stalk of the 50S ribosomal subunit. The N-terminus interacts with L11 and the large rRNA to form the base of the stalk. The C-terminus forms an elongated spine to which L12 dimers bind in a sequential fashion forming a multimeric L10(L12)X complex.

In terms of biological role, forms part of the ribosomal stalk, playing a central role in the interaction of the ribosome with GTP-bound translation factors. The polypeptide is Large ribosomal subunit protein uL10 (Thermomicrobium roseum (strain ATCC 27502 / DSM 5159 / P-2)).